The following is a 185-amino-acid chain: Ribosome-recycling factor (185 aa).

This sequence belongs to the RRF family.

The protein resides in the cytoplasm. Functionally, responsible for the release of ribosomes from messenger RNA at the termination of protein biosynthesis. May increase the efficiency of translation by recycling ribosomes from one round of translation to another. The sequence is that of Ribosome-recycling factor from Thermus thermophilus (strain ATCC BAA-163 / DSM 7039 / HB27).